Here is a 77-residue protein sequence, read N- to C-terminus: U8-lycotoxin-Ls1r (77 aa).

An N-terminal signal peptide occupies residues 1–20; it reads MKLIIFTGLVLFAIVSLIEA. Residues 21–26 constitute a propeptide that is removed on maturation; that stretch reads QAENEK.

The protein belongs to the neurotoxin 19 (CSTX) family. 08 (U8-Lctx) subfamily. In terms of processing, contains 4 disulfide bonds. As to expression, expressed by the venom gland.

The protein localises to the secreted. In Lycosa singoriensis (Wolf spider), this protein is U8-lycotoxin-Ls1r.